The primary structure comprises 273 residues: Large ribosomal subunit protein uL2 (273 aa).

The segment at 224–263 (AMNPVDHPHGGGEGRNFGKHPVTPWGLQTKGKKTRKNKRT) is disordered. Residues 253–263 (KGKKTRKNKRT) show a composition bias toward basic residues.

The protein belongs to the universal ribosomal protein uL2 family. Part of the 50S ribosomal subunit. Forms a bridge to the 30S subunit in the 70S ribosome.

Functionally, one of the primary rRNA binding proteins. Required for association of the 30S and 50S subunits to form the 70S ribosome, for tRNA binding and peptide bond formation. It has been suggested to have peptidyltransferase activity; this is somewhat controversial. Makes several contacts with the 16S rRNA in the 70S ribosome. The protein is Large ribosomal subunit protein uL2 of Buchnera aphidicola subsp. Schizaphis graminum (strain Sg).